The primary structure comprises 265 residues: Probable enoyl-CoA hydratase 1, peroxisomal (265 aa).

Met-1 carries the N-acetylmethionine modification. Substrate is bound by residues 68–72 (SGVDL) and Ala-112. Residues 263-265 (SKL) carry the Microbody targeting signal motif.

The protein belongs to the enoyl-CoA hydratase/isomerase family.

The protein resides in the peroxisome. The catalysed reaction is a (3S)-3-hydroxyacyl-CoA = a (2E)-enoyl-CoA + H2O. The enzyme catalyses a 4-saturated-(3S)-3-hydroxyacyl-CoA = a (3E)-enoyl-CoA + H2O. It participates in lipid metabolism; fatty acid beta-oxidation. Straight-chain enoyl-CoA thioesters from C4 up to at least C16 are processed, although with decreasing catalytic rate. The sequence is that of Probable enoyl-CoA hydratase 1, peroxisomal from Arabidopsis thaliana (Mouse-ear cress).